The primary structure comprises 211 residues: Methylthioribulose-1-phosphate dehydratase (211 aa).

Histidine 94 and histidine 96 together coordinate Zn(2+).

This sequence belongs to the aldolase class II family. MtnB subfamily. It depends on Zn(2+) as a cofactor.

The enzyme catalyses 5-(methylsulfanyl)-D-ribulose 1-phosphate = 5-methylsulfanyl-2,3-dioxopentyl phosphate + H2O. It functions in the pathway amino-acid biosynthesis; L-methionine biosynthesis via salvage pathway; L-methionine from S-methyl-5-thio-alpha-D-ribose 1-phosphate: step 2/6. Catalyzes the dehydration of methylthioribulose-1-phosphate (MTRu-1-P) into 2,3-diketo-5-methylthiopentyl-1-phosphate (DK-MTP-1-P). This Pseudoalteromonas translucida (strain TAC 125) protein is Methylthioribulose-1-phosphate dehydratase.